The sequence spans 173 residues: Crossover junction endodeoxyribonuclease RuvC (173 aa).

Residues D8, E69, and D141 contribute to the active site. Residues D8, E69, and D141 each contribute to the Mg(2+) site.

It belongs to the RuvC family. In terms of assembly, homodimer which binds Holliday junction (HJ) DNA. The HJ becomes 2-fold symmetrical on binding to RuvC with unstacked arms; it has a different conformation from HJ DNA in complex with RuvA. In the full resolvosome a probable DNA-RuvA(4)-RuvB(12)-RuvC(2) complex forms which resolves the HJ. The cofactor is Mg(2+).

It is found in the cytoplasm. It carries out the reaction Endonucleolytic cleavage at a junction such as a reciprocal single-stranded crossover between two homologous DNA duplexes (Holliday junction).. The RuvA-RuvB-RuvC complex processes Holliday junction (HJ) DNA during genetic recombination and DNA repair. Endonuclease that resolves HJ intermediates. Cleaves cruciform DNA by making single-stranded nicks across the HJ at symmetrical positions within the homologous arms, yielding a 5'-phosphate and a 3'-hydroxyl group; requires a central core of homology in the junction. The consensus cleavage sequence is 5'-(A/T)TT(C/G)-3'. Cleavage occurs on the 3'-side of the TT dinucleotide at the point of strand exchange. HJ branch migration catalyzed by RuvA-RuvB allows RuvC to scan DNA until it finds its consensus sequence, where it cleaves and resolves the cruciform DNA. The sequence is that of Crossover junction endodeoxyribonuclease RuvC from Xylella fastidiosa (strain 9a5c).